The primary structure comprises 237 residues: MVAQGFTVDLKKPLVFQVGHLGEDYEEWVHQPIATKEGPRFFQSDFWEFLTLTVWWAVPVIWLPVVVWCISRSVSMGCSLPEIVPIVVMGIFIWTFFEYVLHRFVFHIKTKSYWGNTAHYLIHGCHHKHPMDHLRLVFPPTATAILCFPFWNIAKAISTPSTAPALFGGGMLGYVMYDVTHYYLHHAQPTRPVTKNLKKYHLNHHFRIQDKGFGITSSLWDIVFGTLPTTKAPRKEQ.

The next 2 membrane-spanning stretches (helical) occupy residues 50–70 (LTLT…VWCI) and 80–100 (LPEI…FEYV). 5 residues coordinate Zn(2+): His-102, His-107, His-123, His-126, and His-127. A run of 2 helical transmembrane segments spans residues 137-157 (VFPP…AKAI) and 164-184 (PALF…HYYL). Positions 181, 185, 201, 204, and 205 each coordinate Zn(2+).

This sequence belongs to the sterol desaturase family. In terms of assembly, interacts with CYTB5-A, CYTB5-B, CYTB5-C and CYTB5-D. Interacts indirectly with BI-1 via CYTB5-D. Zn(2+) serves as cofactor. In terms of tissue distribution, expressed in leaves, roots, flowers and seeds.

It is found in the endoplasmic reticulum membrane. The enzyme catalyses an N-(1,2-saturated acyl)sphinganine + 2 Fe(II)-[cytochrome b5] + O2 + 2 H(+) = an N-[(2'R)-hydroxyacyl]sphinganine + 2 Fe(III)-[cytochrome b5] + H2O. Fatty acid 2-hydroxylase involved in the alpha-hydroxylation of sphingolipid-associated very long-chain fatty acids (VLCFA). Probably involved in the resistance response to oxidative stress. In Arabidopsis thaliana (Mouse-ear cress), this protein is Dihydroceramide fatty acyl 2-hydroxylase FAH1.